The sequence spans 217 residues: Large ribosomal subunit protein uL3 (217 aa).

The segment covering 133 to 145 (GRASHGNSRSHNV) has biased composition (polar residues). A disordered region spans residues 133–153 (GRASHGNSRSHNVPGSIGMAQ). Glutamine 153 bears the N5-methylglutamine mark.

The protein belongs to the universal ribosomal protein uL3 family. As to quaternary structure, part of the 50S ribosomal subunit. Forms a cluster with proteins L14 and L19. Methylated by PrmB.

In terms of biological role, one of the primary rRNA binding proteins, it binds directly near the 3'-end of the 23S rRNA, where it nucleates assembly of the 50S subunit. This is Large ribosomal subunit protein uL3 from Ralstonia pickettii (strain 12J).